We begin with the raw amino-acid sequence, 475 residues long: Protein EARLY HEADING DATE 2 (475 aa).

The segment covering 1-16 (MLLSDLSSDQEATGSN) has biased composition (polar residues). Residues 1 to 26 (MLLSDLSSDQEATGSNSHGGGGGDRM) form a disordered region. 2 consecutive C2H2-type zinc fingers follow at residues 105 to 127 (FVCE…RRGH) and 155 to 185 (YVCP…SRKH). Short sequence motifs (nuclear localization signal) lie at residues 123-130 (HRRGHNLP) and 177-184 (IKKHFSRK). Residues 190–213 (WRCERCGKRYAVHSDWKAHVKNCG) form a C2H2-type 2; degenerate zinc finger. Positions 192, 195, 208, 212, 219, 221, 234, and 238 each coordinate Zn(2+). The CCHC-type 2; atypical zinc-finger motif lies at 217–240 (YRCDCGILFSRKDSLLTHRAFCDA). The SHR-binding stretch occupies residues 227 to 239 (RKDSLLTHRAFCD).

In terms of tissue distribution, mostly expressed in developing leaves (more in sheaths than in blades, especially in the outer epidermal cell of immature leaves and in the region immediately beneath the meristem where internodes are visible) and panicles, and, at very low levels, around the shoot apex and in roots.

The protein localises to the nucleus. In terms of biological role, transcription activator that acts as a flowering master switch in both long and short days, independently of the circadian clock. Promotes flowering upstream of HD1 by up-regulating FTL1, FTL4, FTL5, FTL6, EHD1, HD3A and RFT1. Seems to repress FTL11 expression. May recognize the consensus motif 5'-TTTGTCGTAAT-3' in target gene promoters. The polypeptide is Protein EARLY HEADING DATE 2 (Oryza sativa subsp. japonica (Rice)).